Here is a 237-residue protein sequence, read N- to C-terminus: Segregation and condensation protein A (237 aa).

Belongs to the ScpA family. As to quaternary structure, component of a cohesin-like complex composed of ScpA, ScpB and the Smc homodimer, in which ScpA and ScpB bind to the head domain of Smc. The presence of the three proteins is required for the association of the complex with DNA.

It is found in the cytoplasm. In terms of biological role, participates in chromosomal partition during cell division. May act via the formation of a condensin-like complex containing Smc and ScpB that pull DNA away from mid-cell into both cell halves. The protein is Segregation and condensation protein A of Streptococcus thermophilus (strain CNRZ 1066).